The chain runs to 693 residues: Phosphoribosylformylglycinamidine synthase subunit PurL (693 aa).

The active site involves H34. ATP-binding residues include Y37 and K76. E78 lines the Mg(2+) pocket. Substrate-binding positions include 79–82 (SHNH) and R101. H80 acts as the Proton acceptor in catalysis. Residue D102 participates in Mg(2+) binding. Q222 lines the substrate pocket. Position 248 (D248) interacts with Mg(2+). 292–294 (ETQ) is a substrate binding site. Residues D470 and G507 each coordinate ATP. S510 contacts substrate.

Belongs to the FGAMS family. Monomer. Part of the FGAM synthase complex composed of 1 PurL, 1 PurQ and 2 PurS subunits.

The protein resides in the cytoplasm. The catalysed reaction is N(2)-formyl-N(1)-(5-phospho-beta-D-ribosyl)glycinamide + L-glutamine + ATP + H2O = 2-formamido-N(1)-(5-O-phospho-beta-D-ribosyl)acetamidine + L-glutamate + ADP + phosphate + H(+). Its pathway is purine metabolism; IMP biosynthesis via de novo pathway; 5-amino-1-(5-phospho-D-ribosyl)imidazole from N(2)-formyl-N(1)-(5-phospho-D-ribosyl)glycinamide: step 1/2. Its function is as follows. Part of the phosphoribosylformylglycinamidine synthase complex involved in the purines biosynthetic pathway. Catalyzes the ATP-dependent conversion of formylglycinamide ribonucleotide (FGAR) and glutamine to yield formylglycinamidine ribonucleotide (FGAM) and glutamate. The FGAM synthase complex is composed of three subunits. PurQ produces an ammonia molecule by converting glutamine to glutamate. PurL transfers the ammonia molecule to FGAR to form FGAM in an ATP-dependent manner. PurS interacts with PurQ and PurL and is thought to assist in the transfer of the ammonia molecule from PurQ to PurL. The chain is Phosphoribosylformylglycinamidine synthase subunit PurL from Pyrobaculum islandicum (strain DSM 4184 / JCM 9189 / GEO3).